The primary structure comprises 273 residues: Bis(5'-nucleosyl)-tetraphosphatase, symmetrical (273 aa).

The protein belongs to the Ap4A hydrolase family.

The enzyme catalyses P(1),P(4)-bis(5'-adenosyl) tetraphosphate + H2O = 2 ADP + 2 H(+). In terms of biological role, hydrolyzes diadenosine 5',5'''-P1,P4-tetraphosphate to yield ADP. This chain is Bis(5'-nucleosyl)-tetraphosphatase, symmetrical, found in Aromatoleum aromaticum (strain DSM 19018 / LMG 30748 / EbN1) (Azoarcus sp. (strain EbN1)).